A 1976-amino-acid polypeptide reads, in one-letter code: DNA-directed RNA polymerase V subunit 1 (1976 aa).

C57, C60, C68, H71, C98, and C101 together coordinate Zn(2+). Mg(2+)-binding residues include D449, D451, and D453. A bridging helix region spans residues 751 to 763 (PYEEMAHSIAARE). Repeat unit 1 spans residues 1215–1216 (WG). Residues 1215-1693 (WGKRVDVGTG…AKKFPSSGGW (479 aa)) form an 18 X 2 AA repeats of [WG]-[GW] repeats region. 3 disordered regions span residues 1272–1291 (EEEMAEWAESPERDSALGEP), 1298–1718 (DFQN…EDNL), and 1847–1976 (FTKP…QTQT). Basic and acidic residues-rich tracts occupy residues 1281-1291 (SPERDSALGEP) and 1298-1307 (DFQNLHDEGK). The stretch at 1329–1330 (WG) is repeat 2. Residues 1332 to 1348 (SKSTGGEANPESNWEKT) show a composition bias toward polar residues. The segment covering 1349 to 1371 (TNVEKEDAWSSWNTRKDAQESSK) has biased composition (basic and acidic residues). 15 repeat units span residues 1378–1379 (WG), 1415–1416 (WG), 1430–1431 (WG), 1439–1440 (WG), 1447–1448 (WG), 1464–1465 (WG), 1498–1499 (WG), 1528–1529 (WG), 1545–1546 (WG), 1562–1563 (WG), 1596–1597 (WG), 1604–1605 (WG), 1621–1622 (WG), 1638–1639 (WG), and 1641–1642 (WG). Basic and acidic residues predominate over residues 1415–1430 (WGHKSVSDKSWDKKNW). Residues 1491–1501 (TESNGATWGSS) show a composition bias toward polar residues. Residues 1648 to 1678 (AEDKDTNEDDRNPWVSLKETKSREKDDKERS) show a composition bias toward basic and acidic residues. 2 consecutive repeat copies span residues 1680–1681 (WG) and 1692–1693 (GW). Positions 1869 to 1878 (EQSQPPNQSI) are enriched in polar residues. Over residues 1886-1976 (QTQTQSQSPS…SSQSPSQTQT (91 aa)) the composition is skewed to low complexity.

The protein belongs to the RNA polymerase beta' chain family. Component of the RNA polymerase V complex. Interacts with NRPD4, NRPD2A, and (via C-terminus) with AGO4. Interacts with SUVH2. In terms of tissue distribution, mostly expressed in flowers, and, to a lower extent, in leaves. Present in sperm cells.

It localises to the nucleus. It is found in the nucleolus. The enzyme catalyses RNA(n) + a ribonucleoside 5'-triphosphate = RNA(n+1) + diphosphate. In terms of biological role, DNA-dependent RNA polymerase catalyzes the transcription of DNA into RNA using the four ribonucleoside triphosphates as substrates. Largest and catalytic component of RNA polymerase V involved in RNA-directed DNA methylation-dependent (RdDM) silencing of endogenous repeated sequences, including transposable elements. Also required for full erasure of methylation when the RNA trigger is withdrawn. Seems also involved in the synthesis of short-interfering RNAs (siRNA). Essential component of a self-reinforcing loop coupling de novo DNA methylation to siRNA production. Involved in the maintenance of post-transcriptional RNA silencing. The chain is DNA-directed RNA polymerase V subunit 1 (NRPE1) from Arabidopsis thaliana (Mouse-ear cress).